The sequence spans 269 residues: Tryptophan synthase alpha chain (269 aa).

Residues E49 and D60 each act as proton acceptor in the active site.

The protein belongs to the TrpA family. As to quaternary structure, tetramer of two alpha and two beta chains.

It catalyses the reaction (1S,2R)-1-C-(indol-3-yl)glycerol 3-phosphate + L-serine = D-glyceraldehyde 3-phosphate + L-tryptophan + H2O. Its pathway is amino-acid biosynthesis; L-tryptophan biosynthesis; L-tryptophan from chorismate: step 5/5. The alpha subunit is responsible for the aldol cleavage of indoleglycerol phosphate to indole and glyceraldehyde 3-phosphate. This is Tryptophan synthase alpha chain from Pseudomonas putida (strain W619).